A 170-amino-acid chain; its full sequence is uncharacterized protein (170 aa).

An N-terminal signal peptide occupies residues 1 to 28 (MTGGVMSQKFVVGAGLLVCSVCSLSAMA).

Belongs to the fimbrial protein family.

Its function is as follows. Part of the yfcOPQRSUV fimbrial operon. Could contribute to adhesion to various surfaces in specific environmental niches. Increases adhesion to eukaryotic T24 bladder epithelial cells in the absence of fim genes. This is an uncharacterized protein from Escherichia coli (strain K12).